Reading from the N-terminus, the 220-residue chain is Putative amino-acid transporter YisU (220 aa).

6 consecutive transmembrane segments (helical) span residues 15–35, 67–87, 89–109, 128–148, 161–181, and 195–215; these read FFSM…ILPL, TLLI…LPVF, TVMM…TWNI, AFAA…IGVI, WLFM…LAIA, and MLIV…YFGV.

Belongs to the LysE/ArgO transporter (TC 2.A.75) family.

It localises to the cell membrane. This Bacillus subtilis (strain 168) protein is Putative amino-acid transporter YisU (yisU).